The primary structure comprises 313 residues: Olfactory receptor 1J4 (313 aa).

The Extracellular portion of the chain corresponds to 1–25; sequence MKRENQSSVSEFLLLDLPIWPEQQA. Asn-5 is a glycosylation site (N-linked (GlcNAc...) asparagine). The chain crosses the membrane as a helical span at residues 26–49; that stretch reads VFFTLFLGMYLITVLGNLLIILLI. The Cytoplasmic portion of the chain corresponds to 50-57; that stretch reads RLDSHLHT. The helical transmembrane segment at 58–79 threads the bilayer; the sequence is PMFFFLSHLALTDISLSSVTVP. Residues 80–100 lie on the Extracellular side of the membrane; the sequence is KMLLSMQTQDQSILYAGCVTQ. An intrachain disulfide couples Cys-97 to Cys-189. The helical transmembrane segment at 101–120 threads the bilayer; the sequence is MYFFIFFTDLDNFLLTSMAY. Residues 121–139 lie on the Cytoplasmic side of the membrane; the sequence is DRYVAICHPLRYTTIMKEG. The helical transmembrane segment at 140 to 158 threads the bilayer; the sequence is LCNLLVTVSWILSCTNALS. Residues 159-195 are Extracellular-facing; that stretch reads HTLLLAQLSFCADNTIPHFFCDLVALLKLSCSDISLN. A helical membrane pass occupies residues 196–219; sequence ELVIFTVGQAVITLPLICILISYG. At 220-236 the chain is on the cytoplasmic side; that stretch reads HIGVTILKAPSTKGIFK. Residues 237–259 traverse the membrane as a helical segment; the sequence is ALSTCGSHLSVVSLYYGTIIGLY. Topologically, residues 260 to 272 are extracellular; sequence FLPSSSASSDKDV. A helical transmembrane segment spans residues 273-292; the sequence is IASVMYTVITPLLNPFIYSL. Residues 293–313 lie on the Cytoplasmic side of the membrane; the sequence is RNRDIKGALERLFNRATVLSQ.

This sequence belongs to the G-protein coupled receptor 1 family.

The protein resides in the cell membrane. Odorant receptor. The sequence is that of Olfactory receptor 1J4 (OR1J4) from Homo sapiens (Human).